Here is a 247-residue protein sequence, read N- to C-terminus: MELFSEKISIKETNVLLKVDNPKLFKIAKKKIIDERLNLEKYISKNPVFLTTYSPFKISNDAPEIVKLMANSSENANVGPMAAVAGTFSELVIHSLLENNSKSAICENGGDIALSSDFDIIVGLYAGNSPISGNLGFKLKKEKIKNGYGVCTSSGTVGHSVSFGNADSVTVFAKSASIADAAATSIGNFAVGSPDEAINKCLEQAENILKIDGVFVTFQEYAGKVGKIPTLIRTEKKEAFGNVFEMV.

It belongs to the UPF0280 family.

The polypeptide is UPF0280 protein Mevan_0550 (Methanococcus vannielii (strain ATCC 35089 / DSM 1224 / JCM 13029 / OCM 148 / SB)).